Reading from the N-terminus, the 594-residue chain is MTSVEKASKACELCRRKKIRCNRELPSCQNCIVYQEECHYSKRLKRSYSATKKKNGNPVLESAIPSLSPSPSIENGSAMLNSDITSLSNRIFKVEEKLDLILSLLKNSSEPLDRTERKDFPSLAMQIRDANSLVNTKLKEYSRRFELPSQKTSFDDLFSSTFPNFDAAFKDIPDKEWAFENVQWYFRYINCWWPVFYEKDFMDEYECLYRDRNQVKGAWLVSFYSVLALAASRSKAGKDQKLAESFFSTSWYLIQKPGFFLTPQLEKIQALLIMIQFAAHVSLHTLCKALCGQACLMIRDLNLHRESANADFSNKDAELRRRVFWICYIFEITTSLVFGTPSVLSDMDIDCEHPNYEYGRYFSEMPTGDLIFSSEVSLTILKNEVRTKVYSRTNTSNARNREKAIWQIHEKLLCWERALPIELRQYFIALTENAQIYEELDFEKQRLFSACIEVYLSYCNTLIFLHRLNESVEGANICLDTARRAINVLKFFFIIPIAKNVCYLWVFLYCPFTPFLVLFSNIVNGKEPSTDIAFEDLNRMYSVNRFFVKLRDIGGDLAEKLASVTENFIHAAENYFAVQPAFMADAFDFASFLT.

Residues C11 to C38 constitute a DNA-binding region (zn(2)-C6 fungal-type). A helical membrane pass occupies residues Y503–V523.

Its subcellular location is the nucleus. It is found in the membrane. This is an uncharacterized protein from Schizosaccharomyces pombe (strain 972 / ATCC 24843) (Fission yeast).